Consider the following 1179-residue polypeptide: Protein turtle homolog A (1179 aa).

A signal peptide spans 1–20 (MVWCLGLAVLSLVISQGADG). Residues 21–734 (RGKPEVVSVV…TQLPGLLPQP (714 aa)) lie on the Extracellular side of the membrane. 5 Ig-like domains span residues 24 to 124 (PEVV…DFAN), 136 to 216 (PQFQ…GSAT), 226 to 318 (PPVI…AYLT), 322 to 410 (PAQV…SPVT), and 418 to 502 (PAFI…TNVY). Intrachain disulfides connect cysteine 41–cysteine 108, cysteine 158–cysteine 206, cysteine 248–cysteine 301, cysteine 344–cysteine 395, and cysteine 440–cysteine 486. N-linked (GlcNAc...) asparagine glycans are attached at residues asparagine 188 and asparagine 256. 2 consecutive Fibronectin type-III domains span residues 507-611 (SPHV…TTPA) and 623-718 (PLSP…TSGL). 2 N-linked (GlcNAc...) asparagine glycosylation sites follow: asparagine 513 and asparagine 524. The interval 606–626 (LPTTPAAPGLPPTEIPPPLSP) is disordered. A compositionally biased stretch (pro residues) spans 613-626 (PGLPPTEIPPPLSP). Residues 735-755 (VLAGVVGGVCFLGVAVLVSIL) traverse the membrane as a helical segment. At 756–1179 (AGCLLNRRRA…VPHPEQATLL (424 aa)) the chain is on the cytoplasmic side. 3 disordered regions span residues 767–919 (RRRR…PLPG), 940–988 (DWPP…VVGA), and 1015–1079 (AAPR…KRRN). Positions 785 to 800 (GKSAAPSALGSGSPDS) are enriched in low complexity. At serine 809 the chain carries Phosphoserine. 2 stretches are compositionally biased toward pro residues: residues 826–836 (TPSPHPDPPSS) and 906–919 (VAPP…PLPG). Threonine 972 is modified (phosphothreonine). The PDZ-binding motif lies at 1177 to 1179 (TLL).

The protein belongs to the immunoglobulin superfamily. Turtle family. In terms of assembly, interacts with MAGI2 and SHANK1.

The protein localises to the cell membrane. It localises to the synapse. Functionally, functions in dendrite outgrowth and synapse maturation. This Homo sapiens (Human) protein is Protein turtle homolog A (IGSF9).